The chain runs to 917 residues: MFVASPVKTNFNGVSLVKSPAFSALSCRKQHRVPISRQVRAVISREEKAVDQEDGKKSTNKPLINSSQFPWQRSKYTGSKTVTAVVKIRKKIKEKLTERFEHQLELFMKAIGQGMLIQLVSEEIDPETGKGRKSLESPVMGLPKAVKDPRYLVFTADFTVPINFGKPGAILVTNLLSTEICLSEIIIEDSTDTILFPANTWIHSKNDNPQARIIFRSQPCLPSETPDGIKELREKDLVSVRGDGKGERKPHERIYDYDVYNDLGDPRKTERVRPVLGVPETPYPRRCRTGRPLVSKDPPCESRGKEKEEFYVPRDEVFEEIKRDTFRAGRFKALFHNLVPSIAAALSNLDIPFTCFSDIDNLYKSNIVLGHTEPKDTGLGGFIGGFMNGILNVTETLLKYDTPAVIKWDRFAWLRDNEFGRQALAGVNPVNIELLKELPIRSNLDPALYGPQESVLTEEIIAREVEHYGTTIEKALEEKRLFLVDYHDILLPFVEKINSIKEDPRKTYASRTIFFYSKNGALRPLAIELSLPPTAESENKFVYTHGHDATTHWIWKLAKAHVCSNDAGVHQLVNHWLRTHASMEPYIIATNRQLSTMHPVYKLLHPHMRYTLEINARARKSLINGGGIIESCFTPGKYAMELSSAAYKSMWRFDMEGLPADLVRRGMAEEDSSAECGVRLVIDDYPYAADGLLIWKAIKDLVESYVKHFYSDSKSITSDLELQAWWDEIKNKGHYDKKDEPWWPKLNTTQDLSQILTNMIWIASGQHAAINFGQYPFGGYVPNRPTLLRKLIPQETDPDYEMFMRNPQYSFLGSLPTQLQATKVMAVQETLSTHSPDEEYLIELREVQRHWFQDEQVVKYFNKFSEELVKIEKTINERNKDKKLKNRTGAGMPPYELLLPTSPHGVTGRGIPNSISI.

A chloroplast-targeting transit peptide spans 1–40; that stretch reads MFVASPVKTNFNGVSLVKSPAFSALSCRKQHRVPISRQVR. Basic and acidic residues predominate over residues 46–57; sequence EEKAVDQEDGKK. Positions 46 to 66 are disordered; the sequence is EEKAVDQEDGKKSTNKPLINS. One can recognise a PLAT domain in the interval 98–216; it reads ERFEHQLELF…DNPQARIIFR (119 aa). Residues 219–917 enclose the Lipoxygenase domain; that stretch reads PCLPSETPDG…GRGIPNSISI (699 aa). Fe cation contacts are provided by histidine 575, histidine 580, histidine 767, and asparagine 771. The tract at residues 880–904 is disordered; it reads KDKKLKNRTGAGMPPYELLLPTSPH. Isoleucine 917 is a binding site for Fe cation.

It belongs to the lipoxygenase family. Fe cation serves as cofactor.

It localises to the plastid. The protein resides in the chloroplast. The catalysed reaction is (9Z,12Z)-octadecadienoate + O2 = (13S)-hydroperoxy-(9Z,11E)-octadecadienoate. It catalyses the reaction (9Z,12Z,15Z)-octadecatrienoate + O2 = (13S)-hydroperoxy-(9Z,11E,15Z)-octadecatrienoate. Its pathway is lipid metabolism; oxylipin biosynthesis. In terms of biological role, plant lipoxygenases may be involved in a number of diverse aspects of plant physiology including growth and development, pest resistance, and senescence or responses to wounding. Catalyzes the hydroperoxidation of lipids containing a cis,cis-1,4-pentadiene structure. 13S-lipoxygenase that can use linolenic acid as substrates. The protein is Lipoxygenase 6, chloroplastic of Arabidopsis thaliana (Mouse-ear cress).